The chain runs to 154 residues: Myoglobin (154 aa).

Residues 2–148 (GLSDGEWQLV…FRKDMASNYK (147 aa)) enclose the Globin domain. The residue at position 4 (Ser-4) is a Phosphoserine. His-65 contacts nitrite. His-65 contacts O2. Residue Thr-68 is modified to Phosphothreonine. Heme b is bound at residue His-94.

This sequence belongs to the globin family. As to quaternary structure, monomeric.

It is found in the cytoplasm. The protein localises to the sarcoplasm. The enzyme catalyses Fe(III)-heme b-[protein] + nitric oxide + H2O = Fe(II)-heme b-[protein] + nitrite + 2 H(+). The catalysed reaction is H2O2 + AH2 = A + 2 H2O. Functionally, monomeric heme protein which primary function is to store oxygen and facilitate its diffusion within muscle tissues. Reversibly binds oxygen through a pentacoordinated heme iron and enables its timely and efficient release as needed during periods of heightened demand. Depending on the oxidative conditions of tissues and cells, and in addition to its ability to bind oxygen, it also has a nitrite reductase activity whereby it regulates the production of bioactive nitric oxide. Under stress conditions, like hypoxia and anoxia, it also protects cells against reactive oxygen species thanks to its pseudoperoxidase activity. The chain is Myoglobin (MB) from Pongo pygmaeus (Bornean orangutan).